A 205-amino-acid polypeptide reads, in one-letter code: GTP cyclohydrolase-2 (205 aa).

49–53 (RLHSE) is a GTP binding site. Residues Cys-54, Cys-65, and Cys-67 each contribute to the Zn(2+) site. GTP is bound by residues Gln-70, 92-94 (EGR), and Thr-114. Catalysis depends on Asp-126, which acts as the Proton acceptor. Catalysis depends on Arg-128, which acts as the Nucleophile. GTP is bound by residues Thr-149 and Lys-154.

Belongs to the GTP cyclohydrolase II family. Zn(2+) is required as a cofactor.

It carries out the reaction GTP + 4 H2O = 2,5-diamino-6-hydroxy-4-(5-phosphoribosylamino)-pyrimidine + formate + 2 phosphate + 3 H(+). The protein operates within cofactor biosynthesis; riboflavin biosynthesis; 5-amino-6-(D-ribitylamino)uracil from GTP: step 1/4. Its function is as follows. Catalyzes the conversion of GTP to 2,5-diamino-6-ribosylamino-4(3H)-pyrimidinone 5'-phosphate (DARP), formate and pyrophosphate. In Pseudomonas putida (strain ATCC 700007 / DSM 6899 / JCM 31910 / BCRC 17059 / LMG 24140 / F1), this protein is GTP cyclohydrolase-2.